A 953-amino-acid polypeptide reads, in one-letter code: Vacuolar membrane protease (953 aa).

Residues 1-16 are Cytoplasmic-facing; it reads MDQTKPPRRNPLAFTP. A helical transmembrane segment spans residues 17–37; that stretch reads WPVTLITAVVYLAFVIPLLVI. The Vacuolar segment spans residues 38 to 382; the sequence is HHVVPSAPTS…TFVLFRLHTL (345 aa). Residues Asn53 and Asn115 are each glycosylated (N-linked (GlcNAc...) asparagine). 2 residues coordinate Zn(2+): His165 and Asp177. Catalysis depends on Glu211, which acts as the Proton acceptor. Zn(2+) is bound by residues Glu212, Glu237, and His310. The helical transmembrane segment at 383-403 threads the bilayer; sequence FALSVTLLVVAPIVLLLTSII. Over 404-437 the chain is Cytoplasmic; sequence LTKVDKMYLFRTSIRPEGSLEVLPLYGDRGVIRY. Residues 438 to 458 traverse the membrane as a helical segment; the sequence is PFLLGIPTAVTIGLAYLLTKF. Residues 459–464 are Vacuolar-facing; sequence NPYIVH. Residues 465–485 form a helical membrane-spanning segment; the sequence is SSQYAVWSMMVSVWIFLAWFV. The Cytoplasmic portion of the chain corresponds to 486-499; sequence SRVADFARPSAFHR. Residues 500–520 traverse the membrane as a helical segment; that stretch reads VYTLTWTFVVMWVLQVIATVY. Residues 521-524 lie on the Vacuolar side of the membrane; sequence QDRW. Residues 525–545 traverse the membrane as a helical segment; sequence ALGGSYFIFFAYAGTFLATWI. The Cytoplasmic segment spans residues 546 to 650; sequence SYLELFALPR…SLPKWLWLLQ (105 aa). The tract at residues 570–599 is disordered; the sequence is ASSHSSRRGLSEEDEEDEDEAPTESTSLLG. The segment covering 581-591 has biased composition (acidic residues); that stretch reads EEDEEDEDEAP. The chain crosses the membrane as a helical span at residues 651–671; the sequence is FLLAAPIVLILVGPIALLLTG. Topologically, residues 672–684 are vacuolar; sequence SLHQTGQDGSSSL. Residues 685-705 form a helical membrane-spanning segment; the sequence is FIYIAIVALTTLLLSPMLPFV. The Cytoplasmic portion of the chain corresponds to 706–711; the sequence is HRCTYH. The chain crosses the membrane as a helical span at residues 712 to 732; the sequence is IPLFMLAVFAGTLIYNLVAFP. The Vacuolar segment spans residues 733 to 953; sequence FSDSNRLKLF…VEGRKSFEIA (221 aa). Asn779 carries an N-linked (GlcNAc...) asparagine glycan.

This sequence belongs to the peptidase M28 family. Requires Zn(2+) as cofactor.

It localises to the vacuole membrane. Functionally, may be involved in vacuolar sorting and osmoregulation. The protein is Vacuolar membrane protease of Emericella nidulans (strain FGSC A4 / ATCC 38163 / CBS 112.46 / NRRL 194 / M139) (Aspergillus nidulans).